The primary structure comprises 574 residues: Uric acid-xanthine permease (574 aa).

Residues 1-20 (MDNSIHSTDGPDSVIPNSNP) are disordered. 12 helical membrane-spanning segments follow: residues 77–97 (LLAF…VVTP), 111–131 (LQQY…MVQI), 141–161 (YYIG…ISVA), 188–209 (AYGA…LAFV), 217–237 (IFPP…LIGT), 264–284 (LPWG…SIIL), 296–315 (CSVV…CGYF), 338–361 (VYGP…IGDV), 427–447 (CCLI…IVAI), 451–471 (VMGG…QAIV), 482–502 (FILT…TWFG), and 522–542 (LVLE…NAIM). The tract at residues 555–574 (MPVSAHDNRDGEAEYQSKQA) is disordered. Lysine 572 is covalently cross-linked (Glycyl lysine isopeptide (Lys-Gly) (interchain with G-Cter in ubiquitin)).

Belongs to the nucleobase:cation symporter-2 (NCS2) (TC 2.A.40) family. Post-translationally, ubiquitinated by hulA. Ubiquitination leads to internalization, sorting into the endosomal pathway to the vacuolar lumen where uapA is eventually degraded.

The protein localises to the cell membrane. Its function is as follows. Uric acid-xanthine transporter. This Emericella nidulans (strain FGSC A4 / ATCC 38163 / CBS 112.46 / NRRL 194 / M139) (Aspergillus nidulans) protein is Uric acid-xanthine permease (uapA).